The sequence spans 101 residues: Capsid assembly scaffolding protein (101 aa).

The disordered stretch occupies residues 1 to 24 (MPMERDSHEEILNKLNDPELEHSE). Positions 79-99 (EEIKQEELSETITIEDLEKQA) form a coiled coil.

This sequence belongs to the phi29likevirus scaffolding protein family. As to quaternary structure, homodimer. Interacts non-specifically with DNA; probably binds DNA in the early stages of DNA packaging.

Its function is as follows. Scaffolding protein involved in the icosahedric procapsid assembly. Coassembles with the capsid proteins to form the procapsid. The scaffolding protein is found within the capsid as a serie of concentric shells. During DNA packaging, the scaffolding protein molecules are released from the procapsid. The protein is Capsid assembly scaffolding protein (7) of Bacillus subtilis (Bacteriophage B103).